A 238-amino-acid polypeptide reads, in one-letter code: Ribonuclease PH (238 aa).

Phosphate contacts are provided by residues R86 and 124 to 126; that span reads GTR.

It belongs to the RNase PH family. As to quaternary structure, homohexameric ring arranged as a trimer of dimers.

It catalyses the reaction tRNA(n+1) + phosphate = tRNA(n) + a ribonucleoside 5'-diphosphate. Its function is as follows. Phosphorolytic 3'-5' exoribonuclease that plays an important role in tRNA 3'-end maturation. Removes nucleotide residues following the 3'-CCA terminus of tRNAs; can also add nucleotides to the ends of RNA molecules by using nucleoside diphosphates as substrates, but this may not be physiologically important. Probably plays a role in initiation of 16S rRNA degradation (leading to ribosome degradation) during starvation. The sequence is that of Ribonuclease PH from Geotalea daltonii (strain DSM 22248 / JCM 15807 / FRC-32) (Geobacter daltonii).